Reading from the N-terminus, the 174-residue chain is Heat shock protein 22 (174 aa).

A sHSP domain is found at 44 to 154 (QIARWQEQEF…TLKEREVTIE (111 aa)). Phosphothreonine is present on T152. Positions 152–174 (TIEQTGEPAKKSAEEPNDKAASQ) are disordered. Over residues 159–174 (PAKKSAEEPNDKAASQ) the composition is skewed to basic and acidic residues.

It belongs to the small heat shock protein (HSP20) family.

The chain is Heat shock protein 22 (Hsp22) from Drosophila melanogaster (Fruit fly).